A 309-amino-acid polypeptide reads, in one-letter code: MAHLFTLSELSVTEIIRLLEDAEQFRKGHFWRPPEPMFIANLFFEPSTRTKCSFEMAERKLGLHVIPFDADMSSVQKGETLYDTVRTLEAIGVNALVIRHSQDAYFEELRHTVRTPIINAGDGCGHHPTQSLLDLLTIRQEFGTFAGLTAAIIGDIRHSRVARSNAEVLTRLGAKVLFSSPEEWKDEANPYGTYVDIDTAVAEADVIMLLRIQHERHAEKMGLTKEQYHERYGLTIKRAKKMKANSIILHPAPVNRDVEIESSLVESERSRIFKQMENGVYVRMAVLKRAIEEGRMANGNYFEKWQVVQ.

Carbamoyl phosphate contacts are provided by Arg49 and Thr50. Lys77 is a binding site for L-aspartate. Residues Arg99, His127, and Gln130 each contribute to the carbamoyl phosphate site. Arg160 and Arg211 together coordinate L-aspartate. Carbamoyl phosphate contacts are provided by Ala252 and Pro253.

This sequence belongs to the aspartate/ornithine carbamoyltransferase superfamily. ATCase family. As to quaternary structure, heterododecamer (2C3:3R2) of six catalytic PyrB chains organized as two trimers (C3), and six regulatory PyrI chains organized as three dimers (R2).

It carries out the reaction carbamoyl phosphate + L-aspartate = N-carbamoyl-L-aspartate + phosphate + H(+). It participates in pyrimidine metabolism; UMP biosynthesis via de novo pathway; (S)-dihydroorotate from bicarbonate: step 2/3. Functionally, catalyzes the condensation of carbamoyl phosphate and aspartate to form carbamoyl aspartate and inorganic phosphate, the committed step in the de novo pyrimidine nucleotide biosynthesis pathway. In Geobacillus sp. (strain WCH70), this protein is Aspartate carbamoyltransferase catalytic subunit.